We begin with the raw amino-acid sequence, 319 residues long: Taste receptor type 2 member 30 (319 aa).

Met1 is a topological domain (extracellular). Residues 2-22 (ITFLPIIFSILIVVIFVIGNF) traverse the membrane as a helical segment. The Cytoplasmic portion of the chain corresponds to 23-46 (ANGFIALVNSIEWVKRQKISFVDQ). A helical membrane pass occupies residues 47–67 (ILTALAVSRVGLLWVLLLHWY). Over 68–86 (ATQLNPAFYSVEVRITAYN) the chain is Extracellular. Residues 87–107 (VWAVTNHFSSWLATSLSMFYL) form a helical membrane-spanning segment. Topologically, residues 108–126 (LRIANFSNLIFLRIKRRVK) are cytoplasmic. Residues 127-147 (SVVLVILLGPLLFLVCHLFVI) form a helical membrane-spanning segment. Residues 148–178 (NMDETVWTKEYEGNVTWKIKLRSAMYHSNMT) are Extracellular-facing. Asn161 and Asn176 each carry an N-linked (GlcNAc...) asparagine glycan. Residues 179–199 (LTMLANFVPLTLTLISFLLLI) traverse the membrane as a helical segment. The Cytoplasmic segment spans residues 200-229 (CSLCKHLKKMQLHGKGSQDPSTKVHIKALQ). The chain crosses the membrane as a helical span at residues 230 to 250 (TVTSFLLLCAIYFLSMIISVC). Residues 251 to 259 (NFGRLEKQP) lie on the Extracellular side of the membrane. Residues 260-280 (VFMFCQAIIFSYPSTHPFILI) traverse the membrane as a helical segment. The Cytoplasmic segment spans residues 281 to 319 (LGNKKLKQIFLSVLRHVRYWVKDRSLRLHRFTRGALCVF).

It belongs to the G-protein coupled receptor T2R family. Expressed in subsets of taste receptor cells of the tongue and exclusively in gustducin-positive cells.

The protein localises to the membrane. Its function is as follows. Receptor that may play a role in the perception of bitterness and is gustducin-linked. May play a role in sensing the chemical composition of the gastrointestinal content. The activity of this receptor may stimulate alpha gustducin, mediate PLC-beta-2 activation and lead to the gating of TRPM5. This chain is Taste receptor type 2 member 30 (TAS2R30), found in Homo sapiens (Human).